The chain runs to 560 residues: Membrane protein insertase YidC (560 aa).

6 helical membrane-spanning segments follow: residues 5–25 (IINLIAAIVLSLSIIFGWQYF), 334–354 (AIDFGWFYIITKPVFYAMNFF), 357–377 (YVGNFGVSILIVTVIIKLLMF), 431–451 (LPILVQIPVFFSIYKVLYVTI), 476–496 (LFGLLPFSPPSFLMIGAWPIL), and 522–542 (FMPLIFLFMFSSFPVGLLIYW).

Belongs to the OXA1/ALB3/YidC family. Type 1 subfamily. As to quaternary structure, interacts with the Sec translocase complex via SecD. Specifically interacts with transmembrane segments of nascent integral membrane proteins during membrane integration.

It is found in the cell inner membrane. In terms of biological role, required for the insertion and/or proper folding and/or complex formation of integral membrane proteins into the membrane. Involved in integration of membrane proteins that insert both dependently and independently of the Sec translocase complex, as well as at least some lipoproteins. Aids folding of multispanning membrane proteins. This Rickettsia akari (strain Hartford) protein is Membrane protein insertase YidC.